We begin with the raw amino-acid sequence, 117 residues long: MMENDEWWKYLIFPLVATLGGIVNYSKRALAMKRFSKLEFAVEAVSAAFVGLMVTLGGAAMDLSPHWLGMAAGMSGWMGADFVKAVFSQFVQSKIAPINQPGPIDSDNDKPGRTFND.

Transmembrane regions (helical) follow at residues 6 to 26, 40 to 60, and 67 to 87; these read EWWK…VNYS, FAVE…GGAA, and WLGM…KAVF. The tract at residues 97-117 is disordered; that stretch reads PINQPGPIDSDNDKPGRTFND. Basic and acidic residues predominate over residues 107 to 117; it reads DNDKPGRTFND.

In terms of assembly, homomultimer. Isoform Holin: Interacts with isoform Antiholin; this interaction blocks the holin homomultimerization and delays host cell lysis.

It is found in the host cell inner membrane. Functionally, isoform Holin: Accumulates harmlessly in the cytoplasmic membrane until it reaches a critical concentration that triggers the formation of micron-scale pores (holes) causing host cell membrane disruption and endolysin escape into the periplasmic space. Determines the precise timing of host cell lysis. Participates with the endolysin and spanin proteins in the sequential events which lead to the programmed host cell lysis releasing the mature viral particles from the host cell. Isoform Antiholin: Counteracts the aggregation of the holin molecules and thus of pore formation. In Enterobacteria phage PRD1 (Bacteriophage PRD1), this protein is Holin (XXXV).